The primary structure comprises 473 residues: H(+)/Cl(-) exchange transporter ClcA (473 aa).

Topologically, residues 1–32 are cytoplasmic; sequence MKTDTSTFLAQQIVRLRRRDQIRRLMQRDKTP. The helical transmembrane segment at 33–69 threads the bilayer; that stretch reads LAILFMAAVVGTLTGLVGVAFEKTVSWVQNMRIGALV. Over 70-76 the chain is Periplasmic; it reads QVADHAF. Residues 77-100 form a helical membrane-spanning segment; the sequence is LLWPLAFILSALLAMVGYFLVRKF. The Selectivity filter part_1 signature appears at 106 to 110; sequence GSGIP. Chloride is bound at residue Ser107. The helical intramembrane region spans 109-116; it reads IPEIEGAL. The Cytoplasmic portion of the chain corresponds to 117 to 123; that stretch reads EELRPVR. Transmembrane regions (helical) follow at residues 124–141 and 148–166; these read WWRVLPVKFIGGMGTLGA and EGPTVQIGGNLGRMVLDVF. A Selectivity filter part_2 motif is present at residues 146–150; it reads GREGP. At 167–176 the chain is on the cytoplasmic side; the sequence is RMRSAEARHT. 2 consecutive intramembrane regions (helical) follow at residues 177–189 and 193–201; these read LLATGAAAGLSAA and PLAGILFII. Residues 202-214 are Cytoplasmic-facing; the sequence is EEMRPQFRYNLIS. A helical membrane pass occupies residues 215 to 232; sequence IKAVFTGVIMSSIVFRIF. The Periplasmic portion of the chain corresponds to 233–252; that stretch reads NGEAPIIEVGKLSDAPVNTL. Residues 253–281 traverse the membrane as a helical segment; that stretch reads WLYLILGIIFGCVGPVFNSLVLRTQDMFQ. The Cytoplasmic segment spans residues 282 to 287; it reads RFHGGE. Residues 288 to 309 form a helical membrane-spanning segment; that stretch reads IKKWVLMGGAIGGLCGILGLIE. Over 310-329 the chain is Periplasmic; sequence PAAAGGGFNLIPIAAAGNFS. 2 helical membrane-spanning segments follow: residues 330–349 and 355–376; these read VGLLLFIFITRVVTTLLCFS and GIFAPMLALGTLLGTAFGMAAA. Positions 355–359 match the Selectivity filter part_3 motif; sequence GIFAP. 2 residues coordinate chloride: Ile356 and Phe357. Residues 377–386 lie on the Periplasmic side of the membrane; sequence VLFPQYHLEA. Positions 387–401 form an intramembrane region, helical; it reads GTFAIAGMGALMAAS. Positions 402-404 form an intramembrane region, note=Loop between two helices; the sequence is VRA. Residues 405–416 constitute an intramembrane region (helical); it reads PLTGIVLVLEMT. Positions 417–421 form an intramembrane region, note=Loop between two helices; the sequence is DNYQL. Residues 422–438 traverse the membrane as a helical segment; the sequence is ILPMIITCLGATLLAQF. Residues 439–473 lie on the Cytoplasmic side of the membrane; that stretch reads LGGKPLYSTILARTLAKQDAEQAAKNQNAPAGENT. Residue Tyr445 participates in chloride binding.

Belongs to the chloride channel (TC 2.A.49) family. ClcA subfamily. In terms of assembly, homodimer.

The protein resides in the cell inner membrane. The catalysed reaction is 2 chloride(in) + H(+)(out) = 2 chloride(out) + H(+)(in). Proton-coupled chloride transporter. Functions as antiport system and exchanges two chloride ions for 1 proton. Probably acts as an electrical shunt for an outwardly-directed proton pump that is linked to amino acid decarboxylation, as part of the extreme acid resistance (XAR) response. The polypeptide is H(+)/Cl(-) exchange transporter ClcA (Salmonella typhi).